The chain runs to 219 residues: Adenylate kinase (219 aa).

10-15 (GAGKGT) provides a ligand contact to ATP. The segment at 30 to 59 (STGDMLRVAVKVGTPLGIEAKKIMDSGGLV) is NMP. Residues Thr-31, Arg-36, 57-59 (GLV), 85-88 (GFPR), and Gln-92 contribute to the AMP site. The tract at residues 122–159 (GRRTHLKSGRTYHITYNQPKVEGIDDITGEKLVQRSDD) is LID. ATP-binding positions include Arg-123 and 132 to 133 (TY). 2 residues coordinate AMP: Arg-156 and Arg-167. Gly-202 provides a ligand contact to ATP.

The protein belongs to the adenylate kinase family. In terms of assembly, monomer.

The protein resides in the cytoplasm. The enzyme catalyses AMP + ATP = 2 ADP. It functions in the pathway purine metabolism; AMP biosynthesis via salvage pathway; AMP from ADP: step 1/1. Functionally, catalyzes the reversible transfer of the terminal phosphate group between ATP and AMP. Plays an important role in cellular energy homeostasis and in adenine nucleotide metabolism. The sequence is that of Adenylate kinase from Vesicomyosocius okutanii subsp. Calyptogena okutanii (strain HA).